A 45-amino-acid chain; its full sequence is MADKPNMTEITSFDKTKLRKTETQEKNPLPTKETIEQERQGESTP.

The disordered stretch occupies residues 1-45 (MADKPNMTEITSFDKTKLRKTETQEKNPLPTKETIEQERQGESTP). Basic and acidic residues-rich tracts occupy residues 12 to 25 (SFDK…ETQE) and 33 to 45 (ETIE…ESTP).

Belongs to the thymosin beta family.

The protein resides in the cytoplasm. It is found in the cytoskeleton. In terms of biological role, plays an important role in the organization of the cytoskeleton. Binds to and sequesters actin monomers (G actin) and therefore inhibits actin polymerization. This Danio rerio (Zebrafish) protein is Thymosin beta (tmsb).